The primary structure comprises 344 residues: CRISPR-associated endonuclease Cas1 2 (344 aa).

Mn(2+) is bound by residues E167, H235, and E250.

This sequence belongs to the CRISPR-associated endonuclease Cas1 family. In terms of assembly, homodimer, forms a heterotetramer with a Cas2 homodimer. It depends on Mg(2+) as a cofactor. The cofactor is Mn(2+).

Functionally, CRISPR (clustered regularly interspaced short palindromic repeat), is an adaptive immune system that provides protection against mobile genetic elements (viruses, transposable elements and conjugative plasmids). CRISPR clusters contain spacers, sequences complementary to antecedent mobile elements, and target invading nucleic acids. CRISPR clusters are transcribed and processed into CRISPR RNA (crRNA). Acts as a dsDNA endonuclease. Involved in the integration of spacer DNA into the CRISPR cassette. This Rhodospirillum rubrum (strain ATCC 11170 / ATH 1.1.1 / DSM 467 / LMG 4362 / NCIMB 8255 / S1) protein is CRISPR-associated endonuclease Cas1 2.